The chain runs to 191 residues: Calcium-activated potassium channel subunit beta-1 (191 aa).

Over 1–15 (MGKKLVMAQKRGETR) the chain is Cytoplasmic. The helical transmembrane segment at 16 to 36 (ALCLGVAMVMCAVIAYYILGT) threads the bilayer. Residues 37–157 (TMLPLYQKSV…YRRLYGPQTL (121 aa)) are Extracellular-facing. N-linked (GlcNAc...) asparagine glycosylation is found at Asn-80 and Asn-142. The chain crosses the membrane as a helical span at residues 158 to 178 (LFSLFWPTFLLTGGLLIIAMV). The Cytoplasmic portion of the chain corresponds to 179–191 (KINQSLSILAAQR).

The protein belongs to the KCNMB (TC 8.A.14.1) family. KCNMB1 subfamily. Interacts with KCNMA1 tetramer. There are probably 4 molecules of KCMNB1 per KCNMA1 tetramer. In terms of processing, N-glycosylated.

Its subcellular location is the membrane. Functionally, regulatory subunit of the calcium activated potassium KCNMA1 (maxiK) channel. Modulates the calcium sensitivity and gating kinetics of KCNMA1, thereby contributing to KCNMA1 channel diversity. Increases the apparent Ca(2+)/voltage sensitivity of the KCNMA1 channel. It also modifies KCNMA1 channel kinetics and alters its pharmacological properties. It slows down the activation and the deactivation kinetics of the channel. Acts as a negative regulator of smooth muscle contraction by enhancing the calcium sensitivity to KCNMA1. Its presence is also a requirement for internal binding of the KCNMA1 channel opener dehydrosoyasaponin I (DHS-1) triterpene glycoside and for external binding of the agonist hormone 17-beta-estradiol (E2). Increases the binding activity of charybdotoxin (CTX) toxin to KCNMA1 peptide blocker by increasing the CTX association rate and decreasing the dissociation rate. The chain is Calcium-activated potassium channel subunit beta-1 (KCNMB1) from Canis lupus familiaris (Dog).